A 445-amino-acid chain; its full sequence is tRNA modification GTPase MnmE (445 aa).

3 residues coordinate (6S)-5-formyl-5,6,7,8-tetrahydrofolate: Arg-20, Glu-79, and Lys-119. The 157-residue stretch at 215–371 folds into the TrmE-type G domain; that stretch reads GLKLAIIGPP…ILKNIENIAE (157 aa). Residue Asn-225 participates in K(+) binding. GTP-binding positions include 225–230, 244–250, and 269–272; these read NTGKSS, SNIAGTT, and DTAG. Ser-229 contacts Mg(2+). Residues Ser-244, Ile-246, and Thr-249 each contribute to the K(+) site. Mg(2+) is bound at residue Thr-250. A (6S)-5-formyl-5,6,7,8-tetrahydrofolate-binding site is contributed by Lys-445.

Belongs to the TRAFAC class TrmE-Era-EngA-EngB-Septin-like GTPase superfamily. TrmE GTPase family. In terms of assembly, homodimer. Heterotetramer of two MnmE and two MnmG subunits. The cofactor is K(+).

It is found in the cytoplasm. In terms of biological role, exhibits a very high intrinsic GTPase hydrolysis rate. Involved in the addition of a carboxymethylaminomethyl (cmnm) group at the wobble position (U34) of certain tRNAs, forming tRNA-cmnm(5)s(2)U34. The protein is tRNA modification GTPase MnmE of Rickettsia prowazekii (strain Madrid E).